The primary structure comprises 132 residues: Pro-MCH 1 (132 aa).

A signal peptide spans 1 to 24; it reads MRHYVLSISFAVALFLECYTPSTA. Cysteines 120 and 129 form a disulfide.

The protein belongs to the melanin-concentrating hormone family. As to expression, pituitary gland. Produced in neurons of lateral basal hypothalamus which project both to the brain and to the neural lobe of the pituitary gland from where MCH is released.

Its function is as follows. Plays a role in skin pigmentation by antagonizing the action of melanotropin alpha. Induces melanin concentration within the melanophores. May participate in the control of the hypothalamo-pituitary adrenal gland axis by inhibiting the release of ACTH. In Oncorhynchus keta (Chum salmon), this protein is Pro-MCH 1 (mch1).